The sequence spans 68 residues: Protein SrnB (68 aa).

A helical transmembrane segment spans residues tyrosine 23–phenylalanine 42.

Belongs to the Hok/Gef family.

Its subcellular location is the cell inner membrane. Toxic component of a type I toxin-antitoxin (TA) system. Its normal function is believed to be effective plasmid stabilization through postsegregational killing of cells that have lost the F plasmid. Promotes degradation of stable RNA in E.coli. This Escherichia coli (strain K12) protein is Protein SrnB (srnB).